Reading from the N-terminus, the 93-residue chain is Cell division protein FtsB (93 aa).

Topologically, residues 1–3 (MRI) are cytoplasmic. The helical transmembrane segment at 4 to 21 (FVIALTLLFGWLQYTLWF) threads the bilayer. Over 22-93 (GKNGVSDYYT…FYRIVDEEEH (72 aa)) the chain is Periplasmic. Residues 31–75 (TVEDEIEVQQQVNSKLQARNNEMFAEIDDLRQGLDAIEERARHEL) are a coiled coil.

The protein belongs to the FtsB family. In terms of assembly, part of a complex composed of FtsB, FtsL and FtsQ.

It is found in the cell inner membrane. Essential cell division protein. May link together the upstream cell division proteins, which are predominantly cytoplasmic, with the downstream cell division proteins, which are predominantly periplasmic. This chain is Cell division protein FtsB, found in Vibrio campbellii (strain ATCC BAA-1116).